The following is a 292-amino-acid chain: NAD kinase (292 aa).

The active-site Proton acceptor is the Asp-73. NAD(+)-binding positions include 73 to 74 (DG), 147 to 148 (NE), His-158, Arg-175, Asp-177, 188 to 193 (TAYSLS), and Gln-247.

Belongs to the NAD kinase family. Requires a divalent metal cation as cofactor.

The protein resides in the cytoplasm. It carries out the reaction NAD(+) + ATP = ADP + NADP(+) + H(+). Involved in the regulation of the intracellular balance of NAD and NADP, and is a key enzyme in the biosynthesis of NADP. Catalyzes specifically the phosphorylation on 2'-hydroxyl of the adenosine moiety of NAD to yield NADP. The protein is NAD kinase of Escherichia coli O7:K1 (strain IAI39 / ExPEC).